The chain runs to 120 residues: MKRLLSLLTGVLVMTGLLMALIFPQSAYANVSDDKLGDRGEKVDLNNSSVRAFRQFPGMFPTIAGKIVVGGPYASVSDASSVLDASQKSVFDKYKDNFTVTDQEIAVNEGFDRINDGQYR.

The first 29 residues, 1–29 (MKRLLSLLTGVLVMTGLLMALIFPQSAYA), serve as a signal peptide directing secretion.

The protein belongs to the PsbU family. PSII is composed of 1 copy each of membrane proteins PsbA, PsbB, PsbC, PsbD, PsbE, PsbF, PsbH, PsbI, PsbJ, PsbK, PsbL, PsbM, PsbT, PsbX, PsbY, Psb30/Ycf12, peripheral proteins PsbO, CyanoQ (PsbQ), PsbU, PsbV and a large number of cofactors. It forms dimeric complexes.

Its subcellular location is the cellular thylakoid membrane. Its function is as follows. One of the extrinsic, lumenal subunits of photosystem II (PSII). PSII is a light-driven water plastoquinone oxidoreductase, using light energy to abstract electrons from H(2)O, generating a proton gradient subsequently used for ATP formation. The extrinsic proteins stabilize the structure of photosystem II oxygen-evolving complex (OEC), the ion environment of oxygen evolution and protect the OEC against heat-induced inactivation. In Prochlorococcus marinus (strain MIT 9313), this protein is Photosystem II extrinsic protein U.